Here is a 404-residue protein sequence, read N- to C-terminus: Cysteine desulfurase IscS (404 aa).

Pyridoxal 5'-phosphate-binding positions include 75-76 (AT), asparagine 155, glutamine 183, and 203-205 (SAH). Lysine 206 bears the N6-(pyridoxal phosphate)lysine mark. Threonine 243 is a binding site for pyridoxal 5'-phosphate. The Cysteine persulfide intermediate role is filled by cysteine 328. Position 328 (cysteine 328) interacts with [2Fe-2S] cluster.

Belongs to the class-V pyridoxal-phosphate-dependent aminotransferase family. NifS/IscS subfamily. As to quaternary structure, homodimer. Forms a heterotetramer with IscU, interacts with other sulfur acceptors. Pyridoxal 5'-phosphate serves as cofactor.

The protein resides in the cytoplasm. The enzyme catalyses (sulfur carrier)-H + L-cysteine = (sulfur carrier)-SH + L-alanine. Its pathway is cofactor biosynthesis; iron-sulfur cluster biosynthesis. Functionally, master enzyme that delivers sulfur to a number of partners involved in Fe-S cluster assembly, tRNA modification or cofactor biosynthesis. Catalyzes the removal of elemental sulfur atoms from cysteine to produce alanine. Functions as a sulfur delivery protein for Fe-S cluster synthesis onto IscU, an Fe-S scaffold assembly protein, as well as other S acceptor proteins. This is Cysteine desulfurase IscS from Neisseria meningitidis serogroup C / serotype 2a (strain ATCC 700532 / DSM 15464 / FAM18).